The sequence spans 89 residues: Probable monothiol glutaredoxin GrlA (89 aa).

The 89-residue stretch at 1–89 folds into the Glutaredoxin domain; sequence MLYMKGTPKM…EPMLRDAVAA (89 aa). Residue Lys-5 participates in glutathione binding. Cys-13 contacts [2Fe-2S] cluster. Residues Arg-42, Phe-54, and 67–68 contribute to the glutathione site; that span reads SD.

The protein belongs to the glutaredoxin family. Monothiol subfamily.

The polypeptide is Probable monothiol glutaredoxin GrlA (grlA) (Legionella pneumophila subsp. pneumophila (strain Philadelphia 1 / ATCC 33152 / DSM 7513)).